We begin with the raw amino-acid sequence, 468 residues long: Na(+)/H(+) antiporter (468 aa).

8 helical membrane-spanning segments follow: residues 12–32 (HLAL…SEVF), 36–56 (LLVG…PHAA), 81–96 (DVRV…GAYF), 103–123 (IIVM…GFAY), 133–153 (GSLL…ALIV), 169–189 (LLIA…YFAI), 204–224 (WVLL…CVIG), and 258–278 (GIGT…GILF). Asparagine 287 carries an N-linked (GlcNAc...) asparagine glycan. A helical membrane pass occupies residues 293 to 313 (VPAFIDQTFSLLFFTYYGTII). N-linked (GlcNAc...) asparagine glycosylation is present at asparagine 319. A run of 3 helical transmembrane segments spans residues 320–340 (WSVE…TLVC), 362–382 (ALFV…AFLA), and 408–428 (IIWP…GFSI). Phosphoserine occurs at positions 449 and 451.

The protein belongs to the fungal Na(+)/H(+) exchanger family.

The protein localises to the cell membrane. Functionally, sodium export from cell, takes up external protons in exchange for internal sodium ions. Involved in regulation of pH. The polypeptide is Na(+)/H(+) antiporter (Schizosaccharomyces pombe (strain 972 / ATCC 24843) (Fission yeast)).